We begin with the raw amino-acid sequence, 81 residues long: Albumin-1 (81 aa).

Residues 27-34 (LSSVAKMI) constitute a propeptide that is removed on maturation.

In terms of processing, three disulfide bonds are probably present. The C-terminal glycine may be removed from A1b.

Its function is as follows. A1b binds to basic 7S globulin (BG) and stimulates its phosphorylation activity. In Lupinus angustifolius (Narrow-leaved blue lupine), this protein is Albumin-1 (LEG1).